A 301-amino-acid chain; its full sequence is Cell division control protein 2 homolog 1 (301 aa).

Residues 5-297 form the Protein kinase domain; sequence YQRLEKIGEG…AAQALEHPYF (293 aa). ATP-binding positions include 11–19 and Lys-34; that span reads IGEGSYGVV. Ser-15 bears the Phosphoserine mark. Residue Tyr-16 is modified to Phosphotyrosine. Residue Asp-127 is the Proton acceptor of the active site. At Thr-160 the chain carries Phosphothreonine; by CAK.

The protein belongs to the protein kinase superfamily. CMGC Ser/Thr protein kinase family. CDC2/CDKX subfamily. As to quaternary structure, forms a stable but non-covalent complex with a regulatory subunit and with a cyclin.

The catalysed reaction is L-seryl-[protein] + ATP = O-phospho-L-seryl-[protein] + ADP + H(+). The enzyme catalyses L-threonyl-[protein] + ATP = O-phospho-L-threonyl-[protein] + ADP + H(+). With respect to regulation, phosphorylation at Ser-15 or Tyr-16 inactivates the enzyme, while phosphorylation at Thr-160 activates it. Probably involved in the control of the cell cycle. In Trypanosoma congolense, this protein is Cell division control protein 2 homolog 1 (CRK1).